A 280-amino-acid chain; its full sequence is Urease accessory protein UreD (280 aa).

This sequence belongs to the UreD family. In terms of assembly, ureD, UreF and UreG form a complex that acts as a GTP-hydrolysis-dependent molecular chaperone, activating the urease apoprotein by helping to assemble the nickel containing metallocenter of UreC. The UreE protein probably delivers the nickel.

The protein resides in the cytoplasm. In terms of biological role, required for maturation of urease via the functional incorporation of the urease nickel metallocenter. The sequence is that of Urease accessory protein UreD from Mesorhizobium japonicum (strain LMG 29417 / CECT 9101 / MAFF 303099) (Mesorhizobium loti (strain MAFF 303099)).